A 573-amino-acid polypeptide reads, in one-letter code: E3 ubiquitin-protein ligase TRIM23 (573 aa).

Residues 31–76 form an RING-type; degenerate zinc finger; the sequence is CGVCEDVFSLQGDKVPRLLLCGHTVCHDCLTRLPLHGRAIRCPFDR. The B box-type; degenerate zinc-finger motif lies at 122–168; that stretch reads ESIIRCDEDEAHVASVYCTVCATHLCSECSQVTHSTKTLAKHRRVPL. A coiled-coil region spans residues 351–378; it reads RVVLAKQEITRLLETLQKQQQQFTEVAD. Residues 390–573 form an ARF-like region; sequence FTKDNRVYHG…LVAAGVLDVA (184 aa). Residues 411 to 418, 454 to 458, and 513 to 516 contribute to the GTP site; these read LDGAGKTT, VGGKH, and KQDV.

It in the C-terminal section; belongs to the small GTPase superfamily. Arf family. Homodimer. Interacts with PSCD1. Interacts with UBE2D2. Interacts with TBK1 (via N-terminal kinase domain) and p62/SQSTM1.

It is found in the cytoplasm. The protein resides in the endomembrane system. It localises to the golgi apparatus membrane. Its subcellular location is the lysosome membrane. The enzyme catalyses S-ubiquitinyl-[E2 ubiquitin-conjugating enzyme]-L-cysteine + [acceptor protein]-L-lysine = [E2 ubiquitin-conjugating enzyme]-L-cysteine + N(6)-ubiquitinyl-[acceptor protein]-L-lysine.. The protein operates within protein modification; protein ubiquitination. In terms of biological role, acts as an E3 ubiquitin-protein ligase. Plays an essential role in autophagy activation during viral infection. Mechanistically, activates TANK-binding kinase 1/TBK1 by facilitating its dimerization and ability to phosphorylate the selective autophagy receptor SQSTM1. In order to achieve this function, TRIM23 mediates 'Lys-27'-linked auto-ubiquitination of its ADP-ribosylation factor (ARF) domain to induce its GTPase activity and its recruitment to autophagosomes. This is E3 ubiquitin-protein ligase TRIM23 (Trim23) from Rattus norvegicus (Rat).